We begin with the raw amino-acid sequence, 88 residues long: Small ribosomal subunit protein uS17 (88 aa).

Belongs to the universal ribosomal protein uS17 family. In terms of assembly, part of the 30S ribosomal subunit.

One of the primary rRNA binding proteins, it binds specifically to the 5'-end of 16S ribosomal RNA. The polypeptide is Small ribosomal subunit protein uS17 (Nitrosospira multiformis (strain ATCC 25196 / NCIMB 11849 / C 71)).